Here is a 238-residue protein sequence, read N- to C-terminus: MGRKWANIVAKKTAKDGATSKVYAKFGVEIYVAAKQGEPDPELNTALKFVIDRAKQAQVPKHVIDKAIDKAKGNTDETFVEGRYEGFGPNGSMIIVDTLTSNVNRTAANVRAAYGKNGGNMGAAGSVSYLFDKKGVIVFKGDDADSIFELLLEADVDVDDVEAEDGSITVYTAPTDLHKAILALRESGISEFQVTELEMIPQSEVTLEGDDLAVFEKLVDALEADDDVQKVYHNVADV.

It belongs to the TACO1 family. YeeN subfamily.

Its subcellular location is the cytoplasm. The sequence is that of Probable transcriptional regulatory protein SZO_02930 from Streptococcus equi subsp. zooepidemicus (strain H70).